Consider the following 497-residue polypeptide: Lysine--tRNA ligase (497 aa).

Mg(2+)-binding residues include glutamate 409 and glutamate 416.

This sequence belongs to the class-II aminoacyl-tRNA synthetase family. In terms of assembly, homodimer. Mg(2+) serves as cofactor.

The protein localises to the cytoplasm. It carries out the reaction tRNA(Lys) + L-lysine + ATP = L-lysyl-tRNA(Lys) + AMP + diphosphate. The chain is Lysine--tRNA ligase from Streptococcus pyogenes serotype M6 (strain ATCC BAA-946 / MGAS10394).